A 305-amino-acid chain; its full sequence is Popeye domain-containing protein 3 (305 aa).

Residue asparagine 4 is glycosylated (N-linked (GlcNAc...) asparagine). Transmembrane regions (helical) follow at residues serine 34 to phenylalanine 54, serine 55 to alanine 75, and isoleucine 77 to valine 99. The tract at residues proline 273 to glutamine 305 is disordered. Asparagine 298 carries an N-linked (GlcNAc...) asparagine glycan.

The protein belongs to the popeye family. In terms of tissue distribution, expressed first preferentially in atrium and later also in the subepicardial compact layer of the ventricles.

It is found in the membrane. Its function is as follows. May play a role in the maintenance of heart function mediated, at least in part, through cAMP-binding. May play a role in the regulation of KCNK2-mediated current amplitude. This Gallus gallus (Chicken) protein is Popeye domain-containing protein 3 (POPDC3).